Reading from the N-terminus, the 741-residue chain is Catalase-peroxidase (741 aa).

The N-terminal stretch at 1–23 is a signal peptide; it reads MLKKIITALGMSGMLLASSNAIA. The tryptophyl-tyrosyl-methioninium (Trp-Tyr) (with M-249) cross-link spans 102-223; it reads WHDAGTYRIY…YAATQMGLIY (122 aa). The active-site Proton acceptor is H103. The segment at residues 223–249 is a cross-link (tryptophyl-tyrosyl-methioninium (Tyr-Met) (with W-102)); it reads YVNPEGPDGKPDIKGAASEIRQAFRAM. H264 lines the heme b pocket.

Belongs to the peroxidase family. Peroxidase/catalase subfamily. In terms of assembly, homodimer or homotetramer. It depends on heme b as a cofactor. Formation of the three residue Trp-Tyr-Met cross-link is important for the catalase, but not the peroxidase activity of the enzyme.

The enzyme catalyses H2O2 + AH2 = A + 2 H2O. It catalyses the reaction 2 H2O2 = O2 + 2 H2O. Bifunctional enzyme with both catalase and broad-spectrum peroxidase activity. The chain is Catalase-peroxidase from Francisella tularensis subsp. holarctica (strain FTNF002-00 / FTA).